The sequence spans 482 residues: Membrane-bound lytic murein transglycosylase F (482 aa).

The signal sequence occupies residues 1-13 (MKGLFLRIITALA). Residues 14–267 (LLFWAIDMVF…NLKEKYLGHI (254 aa)) form a non-LT domain region. Positions 268–482 (SQFDYVDTRS…NLEEIKENKD (215 aa)) are LT domain. Residue glutamate 312 is part of the active site.

This sequence in the N-terminal section; belongs to the bacterial solute-binding protein 3 family. The protein in the C-terminal section; belongs to the transglycosylase Slt family.

It localises to the cell outer membrane. The enzyme catalyses Exolytic cleavage of the (1-&gt;4)-beta-glycosidic linkage between N-acetylmuramic acid (MurNAc) and N-acetylglucosamine (GlcNAc) residues in peptidoglycan, from either the reducing or the non-reducing ends of the peptidoglycan chains, with concomitant formation of a 1,6-anhydrobond in the MurNAc residue.. Murein-degrading enzyme that degrades murein glycan strands and insoluble, high-molecular weight murein sacculi, with the concomitant formation of a 1,6-anhydromuramoyl product. Lytic transglycosylases (LTs) play an integral role in the metabolism of the peptidoglycan (PG) sacculus. Their lytic action creates space within the PG sacculus to allow for its expansion as well as for the insertion of various structures such as secretion systems and flagella. This Haemophilus influenzae (strain PittEE) protein is Membrane-bound lytic murein transglycosylase F.